A 305-amino-acid polypeptide reads, in one-letter code: UDP-3-O-acyl-N-acetylglucosamine deacetylase (305 aa).

Residues His-79, His-238, and Asp-242 each contribute to the Zn(2+) site. The active-site Proton donor is the His-265.

Belongs to the LpxC family. It depends on Zn(2+) as a cofactor.

The enzyme catalyses a UDP-3-O-[(3R)-3-hydroxyacyl]-N-acetyl-alpha-D-glucosamine + H2O = a UDP-3-O-[(3R)-3-hydroxyacyl]-alpha-D-glucosamine + acetate. The protein operates within glycolipid biosynthesis; lipid IV(A) biosynthesis; lipid IV(A) from (3R)-3-hydroxytetradecanoyl-[acyl-carrier-protein] and UDP-N-acetyl-alpha-D-glucosamine: step 2/6. Its function is as follows. Catalyzes the hydrolysis of UDP-3-O-myristoyl-N-acetylglucosamine to form UDP-3-O-myristoylglucosamine and acetate, the committed step in lipid A biosynthesis. This is UDP-3-O-acyl-N-acetylglucosamine deacetylase from Shewanella woodyi (strain ATCC 51908 / MS32).